The chain runs to 186 residues: TATA-box-binding protein F (186 aa).

Repeat copies occupy residues 10–86 and 101–179.

Belongs to the TBP family.

In terms of biological role, general factor that plays a role in the activation of archaeal genes transcribed by RNA polymerase. Binds specifically to the TATA box promoter element which lies close to the position of transcription initiation. The protein is TATA-box-binding protein F (tbpF) of Halobacterium salinarum (strain ATCC 700922 / JCM 11081 / NRC-1) (Halobacterium halobium).